Reading from the N-terminus, the 620-residue chain is GTP-binding protein At3g49725, chloroplastic (620 aa).

Residues 1 to 65 constitute a chloroplast transit peptide; it reads MSVTTSFGIW…SSFLARDRLR (65 aa). The segment at 57 to 100 is disordered; that stretch reads SFLARDRLRSKTPSSSPFSSKRHTPKTSEIEEESTPKDSVLLNP. In terms of domain architecture, Hflx-type G spans 346–585; the sequence is GTIAVVGYTN…LIDDKMKEKK (240 aa). Residues 352–359, 377–381, 399–402, and 468–471 each bind GTP; these read GYTNAGKS, FATLD, DTVG, and NKID. Residues S359 and T379 each contribute to the Mg(2+) site. 2 stretches are compositionally biased toward acidic residues: residues 478–497 and 511–521; these read EEEK…EDEA and TVDEDQIQNGD. A disordered region spans residues 478–521; that stretch reads EEEKYLDDGEGVGEEDEDEADLKAEETVDASEATVDEDQIQNGD. Position 563-565 (563-565) interacts with GTP; sequence SAL. The tract at residues 597–620 is disordered; sequence LHKRKWRPPRNDDEEERLIPLDQR.

The protein belongs to the TRAFAC class OBG-HflX-like GTPase superfamily. HflX GTPase family. Requires Mg(2+) as cofactor.

The protein localises to the plastid. It is found in the chloroplast. The chain is GTP-binding protein At3g49725, chloroplastic from Arabidopsis thaliana (Mouse-ear cress).